The sequence spans 361 residues: Histidinol-phosphate aminotransferase (361 aa).

N6-(pyridoxal phosphate)lysine is present on lysine 224.

The protein belongs to the class-II pyridoxal-phosphate-dependent aminotransferase family. Histidinol-phosphate aminotransferase subfamily. In terms of assembly, homodimer. The cofactor is pyridoxal 5'-phosphate.

The catalysed reaction is L-histidinol phosphate + 2-oxoglutarate = 3-(imidazol-4-yl)-2-oxopropyl phosphate + L-glutamate. It participates in amino-acid biosynthesis; L-histidine biosynthesis; L-histidine from 5-phospho-alpha-D-ribose 1-diphosphate: step 7/9. The protein is Histidinol-phosphate aminotransferase of Bacillus licheniformis (strain ATCC 14580 / DSM 13 / JCM 2505 / CCUG 7422 / NBRC 12200 / NCIMB 9375 / NCTC 10341 / NRRL NRS-1264 / Gibson 46).